We begin with the raw amino-acid sequence, 261 residues long: Cytochrome c oxidase subunit 3 (261 aa).

The Mitochondrial matrix portion of the chain corresponds to 1-15 (MTRQTHAYHMVNPSP). A helical transmembrane segment spans residues 16–34 (WPLTGALSALLMTSGLIMW). The Mitochondrial intermembrane segment spans residues 35 to 40 (FHFNST). The chain crosses the membrane as a helical span at residues 41–66 (ILLMLGLTTNMLTMYQWWRDVIREST). The Mitochondrial matrix portion of the chain corresponds to 67-72 (FQGHHT). Residues 73–105 (PNVQKGLRYGMILFIISEVLFFTGFFWAFYHSS) traverse the membrane as a helical segment. Residues 106-128 (LAPTPELGGCWPPTGIHPLNPLE) are Mitochondrial intermembrane-facing. The chain crosses the membrane as a helical span at residues 129 to 152 (VPLLNTSVLLASGVSITWAHHSLM). The Mitochondrial matrix segment spans residues 153–155 (EGN). A helical membrane pass occupies residues 156 to 183 (RNHMLQALFITIALGVYFTLLQASEYYE). Topologically, residues 184-190 (APFTISD) are mitochondrial intermembrane. A helical transmembrane segment spans residues 191–223 (GVYGSTFFVATGFHGLHVIIGSTFLIVCFFRQL). The Mitochondrial matrix portion of the chain corresponds to 224-232 (KFHFTSNHH). A helical membrane pass occupies residues 233 to 256 (FGFEAAAWYWHFVDVVWLFLYVSI). The Mitochondrial intermembrane segment spans residues 257 to 261 (YWWGS).

It belongs to the cytochrome c oxidase subunit 3 family. Component of the cytochrome c oxidase (complex IV, CIV), a multisubunit enzyme composed of 14 subunits. The complex is composed of a catalytic core of 3 subunits MT-CO1, MT-CO2 and MT-CO3, encoded in the mitochondrial DNA, and 11 supernumerary subunits COX4I, COX5A, COX5B, COX6A, COX6B, COX6C, COX7A, COX7B, COX7C, COX8 and NDUFA4, which are encoded in the nuclear genome. The complex exists as a monomer or a dimer and forms supercomplexes (SCs) in the inner mitochondrial membrane with NADH-ubiquinone oxidoreductase (complex I, CI) and ubiquinol-cytochrome c oxidoreductase (cytochrome b-c1 complex, complex III, CIII), resulting in different assemblies (supercomplex SCI(1)III(2)IV(1) and megacomplex MCI(2)III(2)IV(2)).

The protein localises to the mitochondrion inner membrane. The catalysed reaction is 4 Fe(II)-[cytochrome c] + O2 + 8 H(+)(in) = 4 Fe(III)-[cytochrome c] + 2 H2O + 4 H(+)(out). Functionally, component of the cytochrome c oxidase, the last enzyme in the mitochondrial electron transport chain which drives oxidative phosphorylation. The respiratory chain contains 3 multisubunit complexes succinate dehydrogenase (complex II, CII), ubiquinol-cytochrome c oxidoreductase (cytochrome b-c1 complex, complex III, CIII) and cytochrome c oxidase (complex IV, CIV), that cooperate to transfer electrons derived from NADH and succinate to molecular oxygen, creating an electrochemical gradient over the inner membrane that drives transmembrane transport and the ATP synthase. Cytochrome c oxidase is the component of the respiratory chain that catalyzes the reduction of oxygen to water. Electrons originating from reduced cytochrome c in the intermembrane space (IMS) are transferred via the dinuclear copper A center (CU(A)) of subunit 2 and heme A of subunit 1 to the active site in subunit 1, a binuclear center (BNC) formed by heme A3 and copper B (CU(B)). The BNC reduces molecular oxygen to 2 water molecules using 4 electrons from cytochrome c in the IMS and 4 protons from the mitochondrial matrix. The protein is Cytochrome c oxidase subunit 3 (MT-CO3) of Eudorcas rufifrons (Red-fronted gazelle).